The following is a 329-amino-acid chain: tRNA (cytidine(32)/guanosine(34)-2'-O)-methyltransferase (329 aa).

5 residues coordinate S-adenosyl-L-methionine: glycine 53, tryptophan 55, aspartate 75, aspartate 91, and aspartate 116. The Proton acceptor role is filled by lysine 156. The tract at residues 221–240 is required for binding to WDR6; the sequence is DFNQLDGPTRIIVPFVTCGD. A Phosphoserine modification is found at serine 271.

The protein belongs to the class I-like SAM-binding methyltransferase superfamily. RNA methyltransferase RlmE family. TRM7 subfamily. As to quaternary structure, interacts with WDR6; the interaction is direct, and required for 2'-O-methylation of position 34 in substrate tRNAs. Found in fetal brain, lung, liver and kidney. Widely expressed in adult tissue; with high expression in heart and liver, lower expression in skeletal muscle, kidney, and pancreas and also lowly expressed in brain and lung. In the adult brain, expressed in amygdala, caudate nucleus, corpus callosum, hippocampus and thalamus.

It is found in the cytoplasm. The protein localises to the nucleus. It carries out the reaction cytidine(32)/guanosine(34) in tRNA + 2 S-adenosyl-L-methionine = 2'-O-methylcytidine(32)/2'-O-methylguanosine(34) in tRNA + 2 S-adenosyl-L-homocysteine + 2 H(+). Its activity is regulated as follows. Inhibited by 2,6-diaminopurine (DAP); inhibition promotes UGA stop-codon readthrough during translation by misincorporation of tRNA(Trp) in the nascent polypeptide. In terms of biological role, methylates the 2'-O-ribose of nucleotides at positions 32 and 34 of the tRNA anticodon loop of substrate tRNAs. Requisite for faithful cytoplasmic translation. Requires THADA for methylation of the nucleotide at position 32 of the anticodon loop of substrate tRNAs. Requires WDR6 for methylation of the nucleotide at position 34 of the anticodon loop of substrate tRNAs. Promotes translation efficiency of the UUU codon. Plays a role in neurogenesis. Required for expression of genes involved in neurogenesis, mitochondrial translation and energy generation, and lipid biosynthesis. Requisite for RNA-mediated gene silencing. May modify position 32 in tRNA(Arg(ACG)), tRNA(Arg(CCG)), tRNA(Arg(UCG)), tRNA(Cys(GCA)), tRNA(Cys(ACA)), tRNA(Gln(CUG)), tRNA(Gln(UUG)), tRNA(Gly(CCC)), tRNA(Leu(CAG))/tRNA(Leu(CAA)), tRNA(Leu(A/IAG)), tRNA(Leu(UAG)), tRNA(Phe(GAA)), tRNA(Pro(AGG))/tRNA(Pro(CGG))/tRNA(Pro(UGG)) and tRNA(Trp(CCA)), and position 34 in tRNA(Phe(GAA)), tRNA(Leu(CAA)), tRNA(Sec(UCA)), and tRNA(Trp(CCA)). This chain is tRNA (cytidine(32)/guanosine(34)-2'-O)-methyltransferase, found in Homo sapiens (Human).